The sequence spans 358 residues: Nicotinate-nucleotide--dimethylbenzimidazole phosphoribosyltransferase (358 aa).

Residue glutamate 313 is the Proton acceptor of the active site.

Belongs to the CobT family.

It catalyses the reaction 5,6-dimethylbenzimidazole + nicotinate beta-D-ribonucleotide = alpha-ribazole 5'-phosphate + nicotinate + H(+). It functions in the pathway nucleoside biosynthesis; alpha-ribazole biosynthesis; alpha-ribazole from 5,6-dimethylbenzimidazole: step 1/2. Catalyzes the synthesis of alpha-ribazole-5'-phosphate from nicotinate mononucleotide (NAMN) and 5,6-dimethylbenzimidazole (DMB). The sequence is that of Nicotinate-nucleotide--dimethylbenzimidazole phosphoribosyltransferase from Corynebacterium glutamicum (strain R).